A 285-amino-acid polypeptide reads, in one-letter code: MARCO-like protein (285 aa).

Positions 1 to 20 are cleaved as a signal peptide; the sequence is MRAFIFFLFMLLAMFSASST. An N-linked (GlcNAc...) asparagine glycan is attached at Asn24. 2 disordered regions span residues 47–77 and 91–285; these read NHLG…GQPG and GRAG…QGNL. Composition is skewed to polar residues over residues 57 to 67 and 105 to 114; these read KQGGSYTQGNP and SGKSNQKGNP. The span at 115–128 shows a compositional bias: low complexity; that stretch reads ESSNKQENSGSSSQ. The segment covering 134 to 145 has biased composition (polar residues); it reads ISTQQGNPGSSD. Residues 160–173 are compositionally biased toward low complexity; sequence GSSSQQGKPGSSSQ. Residues 174–185 are compositionally biased toward polar residues; that stretch reads HGNLGSSTQKGN. The segment covering 186 to 220 has biased composition (low complexity); the sequence is LGSSSLQGHLGLSSHQGKPESSGQQGKPGSSSQQG. Residues 221–285 are compositionally biased toward polar residues; that stretch reads NLGTSGQQEK…PGSSSRQGNL (65 aa).

This chain is MARCO-like protein, found in Homo sapiens (Human).